We begin with the raw amino-acid sequence, 98 residues long: Histone H4-like protein type G (98 aa).

A DNA-binding region spans residues 17 to 21 (KCHRK).

The protein belongs to the histone H4 family. As to quaternary structure, the nucleosome is a histone octamer containing two molecules each of H2A, H2B, H3 and H4 assembled in one H3-H4 heterotetramer and two H2A-H2B heterodimers. The octamer wraps approximately 147 bp of DNA.

The protein resides in the nucleus. Its subcellular location is the chromosome. In terms of biological role, core component of nucleosome. Nucleosomes wrap and compact DNA into chromatin, limiting DNA accessibility to the cellular machineries which require DNA as a template. Histones thereby play a central role in transcription regulation, DNA repair, DNA replication and chromosomal stability. DNA accessibility is regulated via a complex set of post-translational modifications of histones, also called histone code, and nucleosome remodeling. In Homo sapiens (Human), this protein is Histone H4-like protein type G.